A 350-amino-acid chain; its full sequence is UDP-glucose 4-epimerase 2 (350 aa).

Residues 12–14 (GYI), 33–37 (DNYDN), 63–64 (DL), Phe85, and Lys89 each bind NAD(+). Substrate is bound at residue 129–131 (SAT). Tyr153 acts as the Proton acceptor in catalysis. NAD(+) is bound by residues Lys157 and Tyr181. Residues 181 to 183 (YFN), 202 to 204 (NNL), 220 to 222 (TVF), Arg235, and 297 to 300 (RPGD) each bind substrate.

Belongs to the NAD(P)-dependent epimerase/dehydratase family. As to quaternary structure, forms homodimers and heterodimers. NAD(+) serves as cofactor. In terms of tissue distribution, widely expressed. Most highly expressed in stems and flowers.

It is found in the cytoplasm. The catalysed reaction is UDP-alpha-D-glucose = UDP-alpha-D-galactose. It functions in the pathway carbohydrate metabolism; galactose metabolism. Enhanced activity by NaCl. Enhanced activity by NAD(+). Strongly inhibited by UDP. In terms of biological role, catalyzes the interconversion between UDP-glucose and UDP-galactose. Cooperates with UGE3 in pollen development and with UGE4 in cell wall carbohydrate biosynthesis and growth. This is UDP-glucose 4-epimerase 2 from Arabidopsis thaliana (Mouse-ear cress).